The following is a 259-amino-acid chain: Chloroplastic group IIB intron splicing facilitator CRS2, chloroplastic (259 aa).

A disordered region spans residues 1 to 21 (MSLAVATPASARLSPLTTSSP). The N-terminal 49 residues, 1–49 (MSLAVATPASARLSPLTTSSPEPCRRRRLLLSAAAPLRRTRLRRRIAVV), are a transit peptide targeting the chloroplast. Tyr-77 contributes to the tRNA binding site. Catalysis depends on His-82, which acts as the Proton acceptor. Positions 127, 129, and 175 each coordinate tRNA.

Belongs to the PTH family. CRS2 subfamily. In terms of assembly, part of large ribonucleo-protein complexes that include group IIB introns and either CAF1 or CAF2.

The protein localises to the plastid. Its subcellular location is the chloroplast stroma. Functionally, required for the splicing of group IIB introns in chloroplasts. This chain is Chloroplastic group IIB intron splicing facilitator CRS2, chloroplastic, found in Oryza sativa subsp. japonica (Rice).